The following is a 49-amino-acid chain: Large ribosomal subunit protein eL40 (49 aa).

Belongs to the eukaryotic ribosomal protein eL40 family.

This is Large ribosomal subunit protein eL40 from Methanosarcina acetivorans (strain ATCC 35395 / DSM 2834 / JCM 12185 / C2A).